Reading from the N-terminus, the 159-residue chain is Phosphopantetheine adenylyltransferase (159 aa).

Threonine 10 contributes to the substrate binding site. ATP is bound by residues 10-11 (TF) and histidine 18. Residues lysine 42, methionine 74, and arginine 88 each coordinate substrate. ATP is bound by residues 89–91 (GLR), glutamate 99, and 124–130 (WSFISSS).

Belongs to the bacterial CoaD family. As to quaternary structure, homohexamer. The cofactor is Mg(2+).

The protein resides in the cytoplasm. It catalyses the reaction (R)-4'-phosphopantetheine + ATP + H(+) = 3'-dephospho-CoA + diphosphate. Its pathway is cofactor biosynthesis; coenzyme A biosynthesis; CoA from (R)-pantothenate: step 4/5. In terms of biological role, reversibly transfers an adenylyl group from ATP to 4'-phosphopantetheine, yielding dephospho-CoA (dPCoA) and pyrophosphate. This Pectobacterium carotovorum subsp. carotovorum (strain PC1) protein is Phosphopantetheine adenylyltransferase.